The sequence spans 183 residues: Microfibrillar-associated protein 2 (183 aa).

A signal peptide (or 19) is located at residues Met-1–Ala-17. Gln-18 is subject to Pyrrolidone carboxylic acid. Sulfotyrosine occurs at positions 47, 48, and 50. The interval Ser-58–Pro-94 is disordered. Positions Glu-60–Val-74 are enriched in low complexity. One can recognise a ShKT domain in the interval Cys-153–Cys-183. 3 cysteine pairs are disulfide-bonded: Cys-153–Cys-183, Cys-160–Cys-176, and Cys-169–Cys-180.

Belongs to the MFAP family. Forms a ternary complex with BGN and ELN. Interacts with FBN1 (via N-terminal domain) and FBN2. Forms intermolecular disulfide bonds either with other MAGP-1 molecules or with other components of the microfibrils. May form transglutaminase cross-links. In terms of processing, O-glycosylated.

The protein resides in the secreted. It is found in the extracellular space. The protein localises to the extracellular matrix. In terms of biological role, component of the elastin-associated microfibrils. The polypeptide is Microfibrillar-associated protein 2 (MFAP2) (Homo sapiens (Human)).